Reading from the N-terminus, the 210-residue chain is Large ribosomal subunit protein uL4 (210 aa).

Positions 44 to 54 (QRQGTASTLTR) are enriched in polar residues. Residues 44–96 (QRQGTASTLTRSEVRGGGRKPYKQKGTGRARQGSIRTPLRPGGGVIFGPKPRS) are disordered. Over residues 60 to 71 (GGRKPYKQKGTG) the composition is skewed to basic residues.

Belongs to the universal ribosomal protein uL4 family. In terms of assembly, part of the 50S ribosomal subunit.

One of the primary rRNA binding proteins, this protein initially binds near the 5'-end of the 23S rRNA. It is important during the early stages of 50S assembly. It makes multiple contacts with different domains of the 23S rRNA in the assembled 50S subunit and ribosome. Its function is as follows. Forms part of the polypeptide exit tunnel. The polypeptide is Large ribosomal subunit protein uL4 (Prochlorococcus marinus (strain MIT 9515)).